A 394-amino-acid chain; its full sequence is NAD(P)H-quinone oxidoreductase subunit H (394 aa).

Belongs to the complex I 49 kDa subunit family. In terms of assembly, NDH-1 can be composed of about 15 different subunits; different subcomplexes with different compositions have been identified which probably have different functions.

Its subcellular location is the cellular thylakoid membrane. It catalyses the reaction a plastoquinone + NADH + (n+1) H(+)(in) = a plastoquinol + NAD(+) + n H(+)(out). The enzyme catalyses a plastoquinone + NADPH + (n+1) H(+)(in) = a plastoquinol + NADP(+) + n H(+)(out). In terms of biological role, NDH-1 shuttles electrons from an unknown electron donor, via FMN and iron-sulfur (Fe-S) centers, to quinones in the respiratory and/or the photosynthetic chain. The immediate electron acceptor for the enzyme in this species is believed to be plastoquinone. Couples the redox reaction to proton translocation, and thus conserves the redox energy in a proton gradient. Cyanobacterial NDH-1 also plays a role in inorganic carbon-concentration. In Prochlorococcus marinus (strain SARG / CCMP1375 / SS120), this protein is NAD(P)H-quinone oxidoreductase subunit H.